Consider the following 188-residue polypeptide: Inner kinetochore subunit cnl2 (188 aa).

This sequence belongs to the NKP2 family. Component of the inner kinetochore constitutive centromere-associated network (CCAN) (also known as central kinetochore Sim4 complex in fission yeast), which is composed of at least cnl2, cnp3, cnp20, fta1, fta2, fta3, fta4, fta6, fta7, mal2, mhf1, mhf2, mis6, mis15, mis17, sim4 and wip1.

The protein resides in the cytoplasm. Its subcellular location is the nucleus. It localises to the chromosome. It is found in the centromere. The protein localises to the kinetochore. Functionally, component of the kinetochore, a multiprotein complex that assembles on centromeric DNA and attaches chromosomes to spindle microtubules, mediating chromosome segregation and sister chromatid segregation during meiosis and mitosis. Component of the inner kinetochore constitutive centromere-associated network (CCAN), which serves as a structural platform for outer kinetochore assembly. The chain is Inner kinetochore subunit cnl2 (cnl2) from Schizosaccharomyces pombe (strain 972 / ATCC 24843) (Fission yeast).